A 320-amino-acid chain; its full sequence is Malate dehydrogenase (320 aa).

NAD(+) is bound by residues 10 to 15 (GSGMIG) and Asp-34. Arg-83 and Arg-89 together coordinate substrate. NAD(+) is bound by residues Asn-96 and 119 to 121 (ITN). Residues Asn-121 and Arg-152 each contribute to the substrate site. The active-site Proton acceptor is the His-176.

It belongs to the LDH/MDH superfamily. MDH type 3 family.

The enzyme catalyses (S)-malate + NAD(+) = oxaloacetate + NADH + H(+). In terms of biological role, catalyzes the reversible oxidation of malate to oxaloacetate. The sequence is that of Malate dehydrogenase from Bartonella quintana (strain Toulouse) (Rochalimaea quintana).